The sequence spans 215 residues: Adenylate kinase (215 aa).

Position 10 to 15 (10 to 15 (GAGKGT)) interacts with ATP. The tract at residues 30-59 (STGDILRANVRDGTKLGKEAKGYMDKGELV) is NMP. AMP-binding positions include T31, R36, 57-59 (ELV), 85-88 (GYPR), and Q92. An LID region spans residues 126 to 162 (GRYVCTCGESYHMKFNPPKKENVCDACGADLYQRDDD). R127 is an ATP binding site. Residues C130 and C132 each contribute to the Zn(2+) site. Residue 135-136 (SY) participates in ATP binding. Zn(2+) contacts are provided by C149 and C152. Residues R159 and R170 each contribute to the AMP site. Residue G198 coordinates ATP.

Belongs to the adenylate kinase family. In terms of assembly, monomer.

The protein resides in the cytoplasm. It carries out the reaction AMP + ATP = 2 ADP. It participates in purine metabolism; AMP biosynthesis via salvage pathway; AMP from ADP: step 1/1. In terms of biological role, catalyzes the reversible transfer of the terminal phosphate group between ATP and AMP. Plays an important role in cellular energy homeostasis and in adenine nucleotide metabolism. The chain is Adenylate kinase from Methanococcoides burtonii (strain DSM 6242 / NBRC 107633 / OCM 468 / ACE-M).